Reading from the N-terminus, the 648-residue chain is MVLSKRPVRISKACENCRKRKVKCSGGDVCFECQKYNENCVYRQFYRKIKRLKYNNDNSKIDNFSNEQMNIPEFISVRNLNDDSSSIEFFGPASNISFVNQLNHYLRKAERNGYDFLSEGQNDITPEEERKGLEKFGMKLMVLKDNANNFDFSLSNITTEKMNGLLIAYLETWHIPCPIFKAEDLFNLSVRTWKNPSASVHDKALLYLILSIGSAASYFDLQSNSSTLPLARGFFNLALRTVPHIFTELSLDAIRIVFFMSVSAGNLGDTALSYLYSGTAVRMSLAIGLHKCKNFSNDLSDKYQNIRLWVSVWQWEGYWSFCVGRPSCSRQDIPIPAVPNEAFSFSGYGEHGRFLINHEHMRLRVFFSSCCSKIQSEIYSTNRNLLSVLQTVEQISKEVDKEYFSSTNHQLIRSEIGEYCKTLDINSCREWFWIRIYYLYLKLMIFRPFLIFLAYVNISKTSAPDDIIEGLKRGSDQCVQEAIDISKFIVQLNRKVRMLQPIFFICTYLESACTVLLFYIASNSAKIQGQLATEIWAVLRDTCSFLQGSSGPYVGSVSTIAKDALESLNNILVSKKYQDNSVNNTYFDKVMQHVLVHSPAFDDSSDPKFETNRSETPTQYTLDDSANDELMIPDLQGFWEQTLDWINN.

The zn(2)-C6 fungal-type DNA-binding region spans 13 to 42 (ACENCRKRKVKCSGGDVCFECQKYNENCVY).

In terms of assembly, monomer.

It is found in the nucleus. Its function is as follows. May be involved in the facilitation of anaphase progression in mitosis. This Schizosaccharomyces pombe (strain 972 / ATCC 24843) (Fission yeast) protein is Zinc finger protein grt1 (grt1).